The following is a 572-amino-acid chain: Urease subunit alpha (572 aa).

Positions 134–572 constitute a Urease domain; it reads GGIDAHVHFI…LPMAQRYFLF (439 aa). 3 residues coordinate Ni(2+): His139, His141, and Lys222. Lys222 is subject to N6-carboxylysine. His224 is a binding site for substrate. The Ni(2+) site is built by His251 and His277. His325 acts as the Proton donor in catalysis. Asp365 is a Ni(2+) binding site.

Belongs to the metallo-dependent hydrolases superfamily. Urease alpha subunit family. As to quaternary structure, heterotrimer of UreA (gamma), UreB (beta) and UreC (alpha) subunits. Three heterotrimers associate to form the active enzyme. The cofactor is Ni cation. Carboxylation allows a single lysine to coordinate two nickel ions.

The protein localises to the cytoplasm. The catalysed reaction is urea + 2 H2O + H(+) = hydrogencarbonate + 2 NH4(+). It functions in the pathway nitrogen metabolism; urea degradation; CO(2) and NH(3) from urea (urease route): step 1/1. This chain is Urease subunit alpha, found in Synechococcus sp. (strain JA-2-3B'a(2-13)) (Cyanobacteria bacterium Yellowstone B-Prime).